We begin with the raw amino-acid sequence, 553 residues long: HTH-type transcriptional regulator SgrR (553 aa).

In terms of domain architecture, HTH marR-type spans 1–113 (MSTSRLQQQF…RQMLLSQLGR (113 aa)). The H-T-H motif DNA-binding region spans 26–49 (LQALAEVLNCSRRHVRSLLGKMQH). Residues 163 to 494 (ELEPDLSHHW…EELHQDIESW (332 aa)) form a solute-binding region.

Its function is as follows. Activates the small RNA gene sgrS under glucose-phosphate stress conditions as well as yfdZ. Represses its own transcription under both stress and non-stress conditions. Might act as a sensor of the intracellular accumulation of phosphoglucose by binding these molecules in its C-terminal solute-binding domain. The sequence is that of HTH-type transcriptional regulator SgrR from Yersinia pseudotuberculosis serotype I (strain IP32953).